A 252-amino-acid polypeptide reads, in one-letter code: ELH type 2 (252 aa).

A signal peptide spans 1-19; the sequence is AISLLMCLILSALCASSES. Propeptides lie at residues 20–75, 92–130, and 144–185; these read AVVH…VNNE, PQEVSGLKPVMMSRASASADENSLFDLYNTDGAMYQREL, and AAGD…SGIA. Residues 145–161 show a composition bias toward basic and acidic residues; the sequence is AGDEDKAEEHNPETESH. The disordered stretch occupies residues 145–171; that stretch reads AGDEDKAEEHNPETESHSRRKRSALTP. A Lysine amide modification is found at Lys-222.

Belongs to the molluscan ELH family. In terms of tissue distribution, bag cell neurons.

Its subcellular location is the secreted. In terms of biological role, ELH acts as a neurotransmitter locally, upon neurons of the abdominal ganglion and as a hormone by diffusing into the circulating hemolymph and modulating the activity of other organs. It specifically causes contraction of smooth muscle in the ovotestis and expulsion of the egg string. Its function is as follows. Alpha-BCP decreases the activity of a cluster of neurons in the left upper quadrant of the abdominal ganglion. Functionally, beta-BCP specifically excites 2 neurons, L1 and R1, in the abdominal ganglion. The protein is ELH type 2 (ELH2) of Aplysia parvula (Dwarf sea hare).